The following is a 252-amino-acid chain: Probable transcriptional regulatory protein CE1776 (252 aa).

Residues 1–22 (MAGHSKWATTKHKKAANDAKRG) are disordered.

Belongs to the TACO1 family.

It localises to the cytoplasm. This chain is Probable transcriptional regulatory protein CE1776, found in Corynebacterium efficiens (strain DSM 44549 / YS-314 / AJ 12310 / JCM 11189 / NBRC 100395).